A 76-amino-acid chain; its full sequence is Transcription modulator YdgT (76 aa).

The protein belongs to the Hha/YmoA/Cnu family.

Functionally, binds to H-NS and modifies the range of genes it silences; H-NS alone silences 'core' genes while the H-NS-Hha complex (and presumably also H-NS-YdgT) silences genes acquired by horizontal gene transfer. Plays a role silencing virulence factors in the absence of factors that induce pathogenicity. This Salmonella typhimurium (strain SL1344) protein is Transcription modulator YdgT (ydgT).